The primary structure comprises 310 residues: Methionyl-tRNA formyltransferase (310 aa).

Residue 109-112 (SLLP) coordinates (6S)-5,6,7,8-tetrahydrofolate.

The protein belongs to the Fmt family.

It carries out the reaction L-methionyl-tRNA(fMet) + (6R)-10-formyltetrahydrofolate = N-formyl-L-methionyl-tRNA(fMet) + (6S)-5,6,7,8-tetrahydrofolate + H(+). In terms of biological role, attaches a formyl group to the free amino group of methionyl-tRNA(fMet). The formyl group appears to play a dual role in the initiator identity of N-formylmethionyl-tRNA by promoting its recognition by IF2 and preventing the misappropriation of this tRNA by the elongation apparatus. This Macrococcus caseolyticus (strain JCSC5402) (Macrococcoides caseolyticum) protein is Methionyl-tRNA formyltransferase.